A 118-amino-acid chain; its full sequence is UPF0295 protein BT9727_0449 (118 aa).

A run of 2 helical transmembrane segments spans residues 12–32 (IRTF…LGVF) and 43–63 (FMMV…WIGM).

The protein belongs to the UPF0295 family.

The protein resides in the cell membrane. The protein is UPF0295 protein BT9727_0449 of Bacillus thuringiensis subsp. konkukian (strain 97-27).